Here is an 872-residue protein sequence, read N- to C-terminus: Alanine--tRNA ligase (872 aa).

Zn(2+) contacts are provided by His567, His571, Cys669, and His673.

Belongs to the class-II aminoacyl-tRNA synthetase family. Zn(2+) is required as a cofactor.

The protein resides in the cytoplasm. The enzyme catalyses tRNA(Ala) + L-alanine + ATP = L-alanyl-tRNA(Ala) + AMP + diphosphate. Functionally, catalyzes the attachment of alanine to tRNA(Ala) in a two-step reaction: alanine is first activated by ATP to form Ala-AMP and then transferred to the acceptor end of tRNA(Ala). Also edits incorrectly charged Ser-tRNA(Ala) and Gly-tRNA(Ala) via its editing domain. The chain is Alanine--tRNA ligase from Streptococcus mutans serotype c (strain ATCC 700610 / UA159).